We begin with the raw amino-acid sequence, 256 residues long: Small ribosomal subunit protein eS1 (256 aa).

Ala-2 bears the N-acetylalanine; partial mark.

It belongs to the eukaryotic ribosomal protein eS1 family. Component of the small ribosomal subunit. Mature ribosomes consist of a small (40S) and a large (60S) subunit. The 40S subunit contains about 33 different proteins and 1 molecule of RNA (18S). The 60S subunit contains about 49 different proteins and 3 molecules of RNA (25S, 5.8S and 5S).

It localises to the cytoplasm. In Lachancea thermotolerans (strain ATCC 56472 / CBS 6340 / NRRL Y-8284) (Yeast), this protein is Small ribosomal subunit protein eS1.